A 265-amino-acid chain; its full sequence is Nitrogenase iron protein 2 (265 aa).

Residue 8–15 participates in ATP binding; sequence GKGGIGKS. Cys91 serves as a coordination point for [4Fe-4S] cluster. Arg94 is subject to ADP-ribosylarginine; by dinitrogenase reductase ADP-ribosyltransferase. Cys126 contributes to the [4Fe-4S] cluster binding site.

The protein belongs to the NifH/BchL/ChlL family. Homodimer. It depends on [4Fe-4S] cluster as a cofactor. Post-translationally, the reversible ADP-ribosylation of Arg-94 inactivates the nitrogenase reductase and regulates nitrogenase activity.

The enzyme catalyses N2 + 8 reduced [2Fe-2S]-[ferredoxin] + 16 ATP + 16 H2O = H2 + 8 oxidized [2Fe-2S]-[ferredoxin] + 2 NH4(+) + 16 ADP + 16 phosphate + 6 H(+). Functionally, the key enzymatic reactions in nitrogen fixation are catalyzed by the nitrogenase complex, which has 2 components: the iron protein and the molybdenum-iron protein. This is Nitrogenase iron protein 2 (nifH2) from Methanothermobacter thermautotrophicus (strain ATCC 29096 / DSM 1053 / JCM 10044 / NBRC 100330 / Delta H) (Methanobacterium thermoautotrophicum).